The sequence spans 890 residues: DNA mismatch repair protein MutS (890 aa).

An ATP-binding site is contributed by 634–641; it reads GPNMGGKS.

Belongs to the DNA mismatch repair MutS family.

This protein is involved in the repair of mismatches in DNA. It is possible that it carries out the mismatch recognition step. This protein has a weak ATPase activity. This chain is DNA mismatch repair protein MutS, found in Burkholderia pseudomallei (strain K96243).